Here is a 214-residue protein sequence, read N- to C-terminus: MADITRLKGELRTEFGKGASRRLRRDFRVPAVVYGNDLDPMHVHVDILEFQAILRNEGVNAVLELEIEGQDHLVMIKAVDQNVLTLDVDHADLLNVKRGEKVEVDVPVIFTGQAAPGALVTQEADVITILADVLNIPEEITVDVEGKEIGDQVLAGDLQMPGNASLVSEEDTLIINVVEPEEEELPETDEEGEGAEGEAAEAAEGESAEGESEE.

Residues V178–E214 are disordered. The span at E179–E214 shows a compositional bias: acidic residues.

The protein belongs to the bacterial ribosomal protein bL25 family. CTC subfamily. As to quaternary structure, part of the 50S ribosomal subunit; part of the 5S rRNA/L5/L18/L25 subcomplex. Contacts the 5S rRNA. Binds to the 5S rRNA independently of L5 and L18.

Its function is as follows. This is one of the proteins that binds to the 5S RNA in the ribosome where it forms part of the central protuberance. The chain is Large ribosomal subunit protein bL25 from Corynebacterium jeikeium (strain K411).